The following is a 941-amino-acid chain: Ankyrin repeat and MYND domain-containing protein 1 (941 aa).

3 MORN repeats span residues 2-24 (YQGEFGLNMKLGYGKFSWPTGES), 25-47 (YHGQFYRDHCHGLGTYMWPDGSS), and 70-92 (FQGLYKADQRFGPGVETYPDGSQ). 7 ANK repeats span residues 292–321 (KGYTVLAAAATHCHNDIVNLLLDCGADVNK), 513–542 (MRRMALSMIERRKRWRTIKLLLRRGADPNL), 545–574 (VPMQVLFLAVKAGDVDGVRLLLEHGARTDI), 581–613 (STLTPLHIAAALPGEEGVQIVELLLHAITDVDA), 657–691 (GGRTALHMACEREDDNKCARDIVRLLLSHGANPNL), 694–723 (SGHSPLSLSIASGNELVVKELLTQGADPNL), and 737–766 (CDLTYEHQRNMDSKLALIDRLISHGADILK). Zn(2+) contacts are provided by cysteine 880, cysteine 883, cysteine 894, cysteine 897, cysteine 903, cysteine 907, histidine 916, and cysteine 920. An MYND-type zinc finger spans residues 880–920 (CYQCGRSIGVRLLPCPRCYGILTCSKYCKTKAWTEFHKKDC).

The chain is Ankyrin repeat and MYND domain-containing protein 1 (ANKMY1) from Homo sapiens (Human).